Reading from the N-terminus, the 206-residue chain is Putative amino-acid transporter YggA (206 aa).

6 consecutive transmembrane segments (helical) span residues 1–21, 37–57, 65–85, 116–136, 148–168, and 185–205; these read MFAT…PIGA, LLAA…GVFG, SPIG…WFGI, LGVT…LGSF, FAAG…FGAA, and TIVG…ALLA.

The protein belongs to the LysE/ArgO transporter (TC 2.A.75) family.

It localises to the cell membrane. The protein is Putative amino-acid transporter YggA (yggA) of Aeromonas salmonicida.